The chain runs to 304 residues: MSSCGVLVVAGTHGNEVNAPWLLQQWQANPDLIDAAGLAVQKVIGNPEALRRRCRYVDRDLNRCFLPEQLEQGASGLEFQRAGELLRLHGPSGEQPCAVAIDLHSTTAAMGNSLVVYGRRPADLALAALVQGALGLPIYLHEADAQQTGFLVESWPCGLVIEVGPVPQGLLNAGVVEQTRLGLESCLRALYQVRQELARLPDALVVHRHLGSRDLPKAENGEPQALVHPELQGRDWQNIASTQAMFRAADGTDRCEAWVGGEIPVFVNEAAYAEKSIAFSLTRREVWPVEPNWLLALKQLLAAA.

Zn(2+)-binding residues include histidine 13 and glutamate 16. Residues arginine 55 and asparagine 62–arginine 63 each bind substrate. Histidine 104 provides a ligand contact to Zn(2+). Residues glutamate 162 and tyrosine 272 each coordinate substrate.

Belongs to the AspA/AstE family. Aspartoacylase subfamily. The cofactor is Zn(2+).

The catalysed reaction is an N-acyl-L-aspartate + H2O = a carboxylate + L-aspartate. This is Probable aspartoacylase from Synechococcus sp. (strain CC9605).